The primary structure comprises 578 residues: GRAM domain-containing protein 4 (578 aa).

Disordered stretches follow at residues glutamate 23–glycine 58 and threonine 136–serine 159. Phosphoserine is present on residues serine 24 and serine 28. Basic and acidic residues predominate over residues serine 44–aspartate 53. A coiled-coil region spans residues histidine 83–glutamine 143. 3 consecutive transmembrane segments (helical) span residues valine 240–leucine 260, isoleucine 334–tyrosine 354, and leucine 356–phenylalanine 376. Positions glutamine 415 to aspartate 435 are disordered. The GRAM domain occupies glycine 445–lysine 523.

Interacts with RTN4 (isoform B). In terms of tissue distribution, expressed in lung and in primary lung squamous cell carcinoma (LSCC).

It is found in the mitochondrion membrane. The protein resides in the endoplasmic reticulum membrane. In terms of biological role, plays a role as a mediator of E2F1-induced apoptosis in the absence of p53/TP53. Plays a role as a mediator of E2F1-induced apoptosis in the absence of p53/TP53. Inhibits TLR9 response to nucelic acids and regulates TLR9-mediated innate immune response. In Homo sapiens (Human), this protein is GRAM domain-containing protein 4.